The sequence spans 237 residues: Phosphoribosylaminoimidazole-succinocarboxamide synthase (237 aa).

The protein belongs to the SAICAR synthetase family.

The catalysed reaction is 5-amino-1-(5-phospho-D-ribosyl)imidazole-4-carboxylate + L-aspartate + ATP = (2S)-2-[5-amino-1-(5-phospho-beta-D-ribosyl)imidazole-4-carboxamido]succinate + ADP + phosphate + 2 H(+). It participates in purine metabolism; IMP biosynthesis via de novo pathway; 5-amino-1-(5-phospho-D-ribosyl)imidazole-4-carboxamide from 5-amino-1-(5-phospho-D-ribosyl)imidazole-4-carboxylate: step 1/2. The polypeptide is Phosphoribosylaminoimidazole-succinocarboxamide synthase (Edwardsiella ictaluri (strain 93-146)).